The sequence spans 173 residues: Crossover junction endodeoxyribonuclease RuvC (173 aa).

Active-site residues include aspartate 8, glutamate 67, and aspartate 139. 3 residues coordinate Mg(2+): aspartate 8, glutamate 67, and aspartate 139.

Belongs to the RuvC family. In terms of assembly, homodimer which binds Holliday junction (HJ) DNA. The HJ becomes 2-fold symmetrical on binding to RuvC with unstacked arms; it has a different conformation from HJ DNA in complex with RuvA. In the full resolvosome a probable DNA-RuvA(4)-RuvB(12)-RuvC(2) complex forms which resolves the HJ. Mg(2+) is required as a cofactor.

The protein resides in the cytoplasm. The catalysed reaction is Endonucleolytic cleavage at a junction such as a reciprocal single-stranded crossover between two homologous DNA duplexes (Holliday junction).. Functionally, the RuvA-RuvB-RuvC complex processes Holliday junction (HJ) DNA during genetic recombination and DNA repair. Endonuclease that resolves HJ intermediates. Cleaves cruciform DNA by making single-stranded nicks across the HJ at symmetrical positions within the homologous arms, yielding a 5'-phosphate and a 3'-hydroxyl group; requires a central core of homology in the junction. The consensus cleavage sequence is 5'-(A/T)TT(C/G)-3'. Cleavage occurs on the 3'-side of the TT dinucleotide at the point of strand exchange. HJ branch migration catalyzed by RuvA-RuvB allows RuvC to scan DNA until it finds its consensus sequence, where it cleaves and resolves the cruciform DNA. The polypeptide is Crossover junction endodeoxyribonuclease RuvC (Shewanella piezotolerans (strain WP3 / JCM 13877)).